A 70-amino-acid polypeptide reads, in one-letter code: Large ribosomal subunit protein bL31c (70 aa).

The protein belongs to the bacterial ribosomal protein bL31 family. Type A subfamily. In terms of assembly, part of the 50S ribosomal subunit.

It is found in the plastid. It localises to the chloroplast. Binds the 23S rRNA. This is Large ribosomal subunit protein bL31c from Porphyra purpurea (Red seaweed).